A 197-amino-acid polypeptide reads, in one-letter code: Ribonuclease HII (197 aa).

In terms of domain architecture, RNase H type-2 spans 14 to 197; the sequence is GIIAGVDEVG…RKNFAPIRIL (184 aa). The a divalent metal cation site is built by aspartate 20, glutamate 21, and aspartate 112.

The protein belongs to the RNase HII family. Requires Mn(2+) as cofactor. It depends on Mg(2+) as a cofactor.

It localises to the cytoplasm. The catalysed reaction is Endonucleolytic cleavage to 5'-phosphomonoester.. Its function is as follows. Endonuclease that specifically degrades the RNA of RNA-DNA hybrids. This chain is Ribonuclease HII, found in Wolbachia pipientis subsp. Culex pipiens (strain wPip).